Reading from the N-terminus, the 284-residue chain is Nucleotide-binding protein Sden_0486 (284 aa).

Residue Gly8–Ser15 coordinates ATP. Residue Asp56–Asn59 coordinates GTP.

The protein belongs to the RapZ-like family.

In terms of biological role, displays ATPase and GTPase activities. The polypeptide is Nucleotide-binding protein Sden_0486 (Shewanella denitrificans (strain OS217 / ATCC BAA-1090 / DSM 15013)).